The sequence spans 232 residues: UPF0758 protein Clos_1766 (232 aa).

The MPN domain occupies Lys110–Ile232. 3 residues coordinate Zn(2+): His181, His183, and Asp194. The JAMM motif motif lies at His181 to Asp194.

It belongs to the UPF0758 family.

This chain is UPF0758 protein Clos_1766, found in Alkaliphilus oremlandii (strain OhILAs) (Clostridium oremlandii (strain OhILAs)).